The following is a 195-amino-acid chain: Putative EGF-like and EMI domain-containing protein 1 (195 aa).

The EGF-like domain maps to 86-97; sequence CTCKSGYQGNRC.

The chain is Putative EGF-like and EMI domain-containing protein 1 (EGFEM1P) from Homo sapiens (Human).